We begin with the raw amino-acid sequence, 392 residues long: Protein trapped in endoderm-1 (392 aa).

The Extracellular portion of the chain corresponds to 1 to 39 (MDQDMGMATGYFQDADMQMDEPAAATQSIYPHSATLFAA). A helical membrane pass occupies residues 40–60 (ISACVFVTIGVLGNLITLLAL). Over 61 to 73 (LKSPTIREHATTA) the chain is Cytoplasmic. The chain crosses the membrane as a helical span at residues 74–94 (FVISLSISDLLFCSFSLPLTA). The Extracellular portion of the chain corresponds to 95–110 (VRFFQESWTFGTTLCK). A helical transmembrane segment spans residues 111–131 (IFPVIFYGNVAVSLLSMVGIT). Topologically, residues 132 to 156 (LNRYILIACHSRYSQIYKPKFITLQ) are cytoplasmic. A helical transmembrane segment spans residues 157–177 (LLFVWAVSFLLLLPPILGIWG). Residues 178 to 202 (EMGLDEATFSCTILKKEGRSIKKTL) lie on the Extracellular side of the membrane. The chain crosses the membrane as a helical span at residues 203 to 223 (FVIGFLLPCLVIIVSYSCIYI). At 224-268 (TVLHQKKKIRNHDNFQIAAAKGSSSSGGGSYMTTTCTRKAREDNR) the chain is on the cytoplasmic side. Residues 269-289 (LTVMMVTIFLCFLVCFLPLML) traverse the membrane as a helical segment. Over 290–302 (ANVVDDERNTSYP) the chain is Extracellular. N-linked (GlcNAc...) asparagine glycosylation is present at asparagine 298. A helical membrane pass occupies residues 303–323 (WLHIIASVMAWASSVINPIIY). At 324–392 (AASNRNYRVA…INQMCQTYSV (69 aa)) the chain is on the cytoplasmic side. Phosphoserine is present on residues serine 359, serine 362, and serine 366. Threonine 372 is subject to Phosphothreonine.

It belongs to the G-protein coupled receptor 1 family. As to expression, in embryos, expression is seen at highest levels in the cuprophilic cells and at lower levels in the amnioserosa, developing CNS, cardiac mesoderm primordium and midline glia.

The protein resides in the cell membrane. In terms of biological role, essential for the first active step of germ cell migration: transepithelial migration of germ cells through the posterior midgut (PMG) epithelium. This chain is Protein trapped in endoderm-1 (Tre1), found in Drosophila melanogaster (Fruit fly).